Reading from the N-terminus, the 275-residue chain is Gap junction gamma-3 protein (275 aa).

Residues 1 to 22 lie on the Cytoplasmic side of the membrane; that stretch reads MCGSFLRRVAAEESRHPTPVGR. The chain crosses the membrane as a helical span at residues 23–43; it reads LLLPALLGLRLVLLAAGGTGV. Topologically, residues 44–77 are extracellular; that stretch reads FGGGEEQSEFVCHTQQAGCKAVCYDAFHPLSPLR. Residues 78–98 form a helical membrane-spanning segment; sequence FWAFQVTLVAVPSALYMGFIL. At 99–134 the chain is on the cytoplasmic side; sequence YHVIWHWEASEKVKTEEETLSQGEKGGEASRAGSSR. The helical transmembrane segment at 135–155 threads the bilayer; sequence LLWAYVAQLGVRLALEGAALG. Topologically, residues 156–196 are extracellular; sequence GQYHLYGFRMPSSFVCRLEPCLGSTNCYLSRPSEKSIFLKT. Residues 197–217 traverse the membrane as a helical segment; sequence MFGVTGLCLLFTLLELVLLGL. Over 218-275 the chain is Cytoplasmic; the sequence is GRWWRIWRHKSPSSNYSPTSQSAKRCKAPTDNFPVVEIRERPGEAGERGSEVPLSARP. Residues 254–267 show a composition bias toward basic and acidic residues; that stretch reads EIRERPGEAGERGS. The segment at 254-275 is disordered; that stretch reads EIRERPGEAGERGSEVPLSARP.

It belongs to the connexin family. Gamma-type subfamily. A connexon is composed of a hexamer of connexins.

It localises to the cell membrane. Its subcellular location is the cell junction. It is found in the gap junction. In terms of biological role, one gap junction consists of a cluster of closely packed pairs of transmembrane channels, the connexons, through which materials of low MW diffuse from one cell to a neighboring cell. This Bos taurus (Bovine) protein is Gap junction gamma-3 protein (GJC3).